We begin with the raw amino-acid sequence, 431 residues long: Glutamate-1-semialdehyde 2,1-aminomutase (431 aa).

An N6-(pyridoxal phosphate)lysine modification is found at lysine 269.

It belongs to the class-III pyridoxal-phosphate-dependent aminotransferase family. HemL subfamily. As to quaternary structure, homodimer. Requires pyridoxal 5'-phosphate as cofactor.

Its subcellular location is the cytoplasm. It carries out the reaction (S)-4-amino-5-oxopentanoate = 5-aminolevulinate. Its pathway is porphyrin-containing compound metabolism; protoporphyrin-IX biosynthesis; 5-aminolevulinate from L-glutamyl-tRNA(Glu): step 2/2. It participates in porphyrin-containing compound metabolism; chlorophyll biosynthesis. This is Glutamate-1-semialdehyde 2,1-aminomutase from Chlorobium phaeobacteroides (strain BS1).